The chain runs to 156 residues: ATP synthase subunit b (156 aa).

The chain crosses the membrane as a helical span at residues 7-27; sequence LIGQLIAFALFVAFCMKFVWP.

It belongs to the ATPase B chain family. F-type ATPases have 2 components, F(1) - the catalytic core - and F(0) - the membrane proton channel. F(1) has five subunits: alpha(3), beta(3), gamma(1), delta(1), epsilon(1). F(0) has three main subunits: a(1), b(2) and c(10-14). The alpha and beta chains form an alternating ring which encloses part of the gamma chain. F(1) is attached to F(0) by a central stalk formed by the gamma and epsilon chains, while a peripheral stalk is formed by the delta and b chains.

It is found in the cell inner membrane. Functionally, f(1)F(0) ATP synthase produces ATP from ADP in the presence of a proton or sodium gradient. F-type ATPases consist of two structural domains, F(1) containing the extramembraneous catalytic core and F(0) containing the membrane proton channel, linked together by a central stalk and a peripheral stalk. During catalysis, ATP synthesis in the catalytic domain of F(1) is coupled via a rotary mechanism of the central stalk subunits to proton translocation. Component of the F(0) channel, it forms part of the peripheral stalk, linking F(1) to F(0). The sequence is that of ATP synthase subunit b from Actinobacillus pleuropneumoniae serotype 5b (strain L20).